The sequence spans 210 residues: Putative truncated L-serine dehydratase SDL1 (210 aa).

It belongs to the serine/threonine dehydratase family. Pyridoxal 5'-phosphate serves as cofactor.

Its subcellular location is the cytoplasm. It catalyses the reaction L-serine = pyruvate + NH4(+). Its pathway is carbohydrate biosynthesis; gluconeogenesis. The chain is Putative truncated L-serine dehydratase SDL1 (SDL1) from Saccharomyces cerevisiae (strain ATCC 204508 / S288c) (Baker's yeast).